A 295-amino-acid polypeptide reads, in one-letter code: ATP synthase gamma chain (295 aa).

Belongs to the ATPase gamma chain family. As to quaternary structure, F-type ATPases have 2 components, CF(1) - the catalytic core - and CF(0) - the membrane proton channel. CF(1) has five subunits: alpha(3), beta(3), gamma(1), delta(1), epsilon(1). CF(0) has three main subunits: a, b and c.

The protein resides in the cell membrane. Produces ATP from ADP in the presence of a proton gradient across the membrane. The gamma chain is believed to be important in regulating ATPase activity and the flow of protons through the CF(0) complex. This Acetivibrio thermocellus (strain ATCC 27405 / DSM 1237 / JCM 9322 / NBRC 103400 / NCIMB 10682 / NRRL B-4536 / VPI 7372) (Clostridium thermocellum) protein is ATP synthase gamma chain.